Consider the following 318-residue polypeptide: Olfactory receptor 10H1 (318 aa).

Over 1-25 the chain is Extracellular; the sequence is MQRANHSTVTQFILVGFSVFPHLQL. N5 is a glycosylation site (N-linked (GlcNAc...) asparagine). The chain crosses the membrane as a helical span at residues 26-46; that stretch reads MLFLLFLLMYLFTLLGNLLIM. Residues 47-54 lie on the Cytoplasmic side of the membrane; that stretch reads ATVWSERS. Residues 55 to 75 traverse the membrane as a helical segment; sequence LHTPMYLFLCALSVSEILYTV. Topologically, residues 76 to 99 are extracellular; the sequence is AIIPRMLADLLSTQRSIAFLACAS. A disulfide bridge connects residues C97 and C189. Residues 100–120 form a helical membrane-spanning segment; it reads QMFFSFSFGFTHSFLLTVMGY. Residues 121–139 are Cytoplasmic-facing; that stretch reads DRYVAICHPLRYNVLMSPR. The helical transmembrane segment at 140–160 threads the bilayer; the sequence is GCACLVGCSWAGGLVMGMVVT. Topologically, residues 161 to 197 are extracellular; the sequence is SAIFHLAFCGHKEIHHFACHVPPLLKLACGDDVLVVA. A helical membrane pass occupies residues 198-218; that stretch reads KGVGLVCITALLGCFLLILLS. The Cytoplasmic portion of the chain corresponds to 219–238; it reads YAFIVAAILKIPSAEGRNKA. A helical membrane pass occupies residues 239 to 259; that stretch reads FSTCASHLTVVVVHYGFASVI. Over 260–272 the chain is Extracellular; sequence YLKPKSPQSLEGD. The chain crosses the membrane as a helical span at residues 273-293; sequence TLMGITYTVLTPFLSPIIFSL. Residues 294–318 are Cytoplasmic-facing; sequence RNKELKVAMKKTFFSKLYPEKNVMM.

The protein belongs to the G-protein coupled receptor 1 family.

The protein localises to the cell membrane. Odorant receptor. The protein is Olfactory receptor 10H1 (OR10H1) of Homo sapiens (Human).